The chain runs to 298 residues: Glutamyl-Q tRNA(Asp) synthetase (298 aa).

L-glutamate-binding positions include 8–12 (RFAPS) and Glu44. The 'HIGH' region motif lies at 11–21 (PSPTGPLHFGS). The Zn(2+) site is built by Cys100, Cys102, Tyr123, and Cys127. Residues Tyr183 and Arg201 each coordinate L-glutamate. A 'KMSKS' region motif is present at residues 239–243 (KLSKQ). Lys242 provides a ligand contact to ATP.

It belongs to the class-I aminoacyl-tRNA synthetase family. GluQ subfamily. Requires Zn(2+) as cofactor.

In terms of biological role, catalyzes the tRNA-independent activation of glutamate in presence of ATP and the subsequent transfer of glutamate onto a tRNA(Asp). Glutamate is transferred on the 2-amino-5-(4,5-dihydroxy-2-cyclopenten-1-yl) moiety of the queuosine in the wobble position of the QUC anticodon. The sequence is that of Glutamyl-Q tRNA(Asp) synthetase from Burkholderia orbicola (strain AU 1054).